Reading from the N-terminus, the 553-residue chain is ATP synthase F(1) complex subunit alpha, mitochondrial (553 aa).

A mitochondrion-targeting transit peptide spans 1–43; the sequence is MLSVRVAAAVVRALPRRAGLVSRNALGSSFIAARNFHASNTHL. Ser53 and Ser65 each carry phosphoserine. Position 76 is a phosphoserine; alternate (Ser76). An O-linked (GlcNAc) serine; alternate glycan is attached at Ser76. Residue Ser106 is modified to Phosphoserine. 3 positions are modified to N6-acetyllysine: Lys123, Lys126, and Lys132. The residue at position 134 (Thr134) is a Phosphothreonine. Lys161 bears the N6-acetyllysine; alternate mark. Lys161 is modified (N6-succinyllysine; alternate). Ser166 bears the Phosphoserine mark. Lys167 is subject to N6-acetyllysine; alternate. Lys167 carries the N6-succinyllysine; alternate modification. At Ser184 the chain carries Phosphoserine. Position 204 is an omega-N-methylarginine (Arg204). ATP is bound by residues Gln215, Gly217, Lys218, Thr219, and Ser220. Mg(2+) is bound at residue Thr219. Residues Lys230 and Lys239 each carry the N6-acetyllysine; alternate modification. N6-succinyllysine; alternate is present on residues Lys230 and Lys239. At Lys240 the chain carries N6-acetyllysine. 2 positions are modified to N6-acetyllysine; alternate: Lys261 and Lys305. Lys261 and Lys305 each carry N6-succinyllysine; alternate. Asp312 serves as a coordination point for Mg(2+). Lys427 bears the N6-acetyllysine; alternate mark. At Lys427 the chain carries N6-succinyllysine; alternate. At Lys434 the chain carries N6-acetyllysine. ATP is bound by residues Gln473 and Gln475. 4 positions are modified to N6-acetyllysine; alternate: Lys498, Lys506, Lys531, and Lys539. Residues Lys498, Lys506, Lys531, and Lys539 each carry the N6-succinyllysine; alternate modification. Lys541 bears the N6-acetyllysine mark.

This sequence belongs to the ATPase alpha/beta chains family. As to quaternary structure, homotrimer. Component of the ATP synthase complex composed at least of ATP5F1A/subunit alpha, ATP5F1B/subunit beta, ATP5MC1/subunit c (homooctomer), MT-ATP6/subunit a, MT-ATP8/subunit 8, ATP5ME/subunit e, ATP5MF/subunit f, ATP5MG/subunit g, ATP5MK/subunit k, ATP5MJ/subunit j, ATP5F1C/subunit gamma, ATP5F1D/subunit delta, ATP5F1E/subunit epsilon, ATP5PF/subunit F6, ATP5PB/subunit b, ATP5PD/subunit d, ATP5PO/subunit OSCP. ATP synthase complex consists of a soluble F(1) head domain (subunits alpha(3) and beta(3)) - the catalytic core - and a membrane F(0) domain - the membrane proton channel (subunits c, a, 8, e, f, g, k and j). These two domains are linked by a central stalk (subunits gamma, delta, and epsilon) rotating inside the F1 region and a stationary peripheral stalk (subunits F6, b, d, and OSCP). Interacts with ATPAF2. Interacts with HRG; the interaction occurs on the surface of T-cells and alters the cell morphology when associated with concanavalin (in vitro). Interacts with PLG (angiostatin peptide); the interaction inhibits most of the angiogenic properties of angiostatin. Interacts with BLOC1S1. Interacts with BCL2L1 isoform BCL-X(L); the interaction mediates the association of BCL2L1 isoform BCL-X(L) with the mitochondrial membrane F(1)F(0) ATP synthase and enhances neurons metabolic efficiency. Interacts with CLN5 and PPT1. Interacts with S100A1; this interaction increases F1-ATPase activity. Interacts with ABCB7; this interaction allows the regulation of cellular iron homeostasis and cellular reactive oxygen species (ROS) levels in cardiomyocytes. In terms of processing, acetylated on lysine residues. BLOC1S1 is required for acetylation.

Its subcellular location is the mitochondrion inner membrane. The protein localises to the cell membrane. Its function is as follows. Subunit alpha, of the mitochondrial membrane ATP synthase complex (F(1)F(0) ATP synthase or Complex V) that produces ATP from ADP in the presence of a proton gradient across the membrane which is generated by electron transport complexes of the respiratory chain. ATP synthase complex consist of a soluble F(1) head domain - the catalytic core - and a membrane F(1) domain - the membrane proton channel. These two domains are linked by a central stalk rotating inside the F(1) region and a stationary peripheral stalk. During catalysis, ATP synthesis in the catalytic domain of F(1) is coupled via a rotary mechanism of the central stalk subunits to proton translocation. In vivo, can only synthesize ATP although its ATP hydrolase activity can be activated artificially in vitro. With the catalytic subunit beta (ATP5F1B), forms the catalytic core in the F(1) domain. Subunit alpha does not bear the catalytic high-affinity ATP-binding sites. In Pongo abelii (Sumatran orangutan), this protein is ATP synthase F(1) complex subunit alpha, mitochondrial.